Consider the following 208-residue polypeptide: Small ribosomal subunit protein uS2 (208 aa).

Residues 189 to 208 (KPDQDLPVPPEEFETRLVQT) form a disordered region.

This sequence belongs to the universal ribosomal protein uS2 family.

This chain is Small ribosomal subunit protein uS2, found in Pyrobaculum arsenaticum (strain DSM 13514 / JCM 11321 / PZ6).